A 79-amino-acid chain; its full sequence is MSEILPYGEDKMGRFGADPEGSDLSFSCRLQDTNSFFAGNQAKRPPKLGQIGRAKRVVIEDDRIDDVLKGMGEKPPSGV.

The interval 1 to 21 (MSEILPYGEDKMGRFGADPEG) is disordered. Residues 43 to 69 (KRPPKLGQIGRAKRVVIEDDRIDDVLK) are inhibitory domain.

Belongs to the CAMK2N family. As to quaternary structure, interacts with CAMK2A and CAMK2B in the presence of Ca(2+)/calmodulin or after autophosphorylation.

Its subcellular location is the nucleus. It localises to the cytoplasm. The protein resides in the cytosol. The protein localises to the synapse. Functionally, potent and specific cellular inhibitor of CaM-kinase II (CAMK2). Traps Ca(2+)/calmodulin on CAMK2. This is Calcium/calmodulin-dependent protein kinase II inhibitor 2 (Camk2n2) from Mus musculus (Mouse).